The primary structure comprises 217 residues: Probable chemoreceptor glutamine deamidase CheD (217 aa).

The segment at 194–217 (ATSGTAPSRGGELFTRASASRTPS) is disordered.

This sequence belongs to the CheD family.

The enzyme catalyses L-glutaminyl-[protein] + H2O = L-glutamyl-[protein] + NH4(+). Its function is as follows. Probably deamidates glutamine residues to glutamate on methyl-accepting chemotaxis receptors (MCPs), playing an important role in chemotaxis. This Cupriavidus pinatubonensis (strain JMP 134 / LMG 1197) (Cupriavidus necator (strain JMP 134)) protein is Probable chemoreceptor glutamine deamidase CheD.